A 346-amino-acid chain; its full sequence is Phosphate acyltransferase (346 aa).

It belongs to the PlsX family. In terms of assembly, homodimer. Probably interacts with PlsY.

The protein resides in the cytoplasm. The enzyme catalyses a fatty acyl-[ACP] + phosphate = an acyl phosphate + holo-[ACP]. It participates in lipid metabolism; phospholipid metabolism. Its function is as follows. Catalyzes the reversible formation of acyl-phosphate (acyl-PO(4)) from acyl-[acyl-carrier-protein] (acyl-ACP). This enzyme utilizes acyl-ACP as fatty acyl donor, but not acyl-CoA. The chain is Phosphate acyltransferase from Brucella suis biovar 1 (strain 1330).